The primary structure comprises 336 residues: Ribose-phosphate pyrophosphokinase (336 aa).

Residues 43 to 45 and 102 to 103 each bind ATP; these read DQE and RQ. 2 residues coordinate Mg(2+): His-136 and Asp-178. Lys-201 is a catalytic residue. D-ribose 5-phosphate-binding positions include Arg-203, Asp-227, and 231 to 235; that span reads DTAGT.

Belongs to the ribose-phosphate pyrophosphokinase family. Class I subfamily. Homohexamer. Mg(2+) serves as cofactor.

The protein resides in the cytoplasm. The catalysed reaction is D-ribose 5-phosphate + ATP = 5-phospho-alpha-D-ribose 1-diphosphate + AMP + H(+). Its pathway is metabolic intermediate biosynthesis; 5-phospho-alpha-D-ribose 1-diphosphate biosynthesis; 5-phospho-alpha-D-ribose 1-diphosphate from D-ribose 5-phosphate (route I): step 1/1. In terms of biological role, involved in the biosynthesis of the central metabolite phospho-alpha-D-ribosyl-1-pyrophosphate (PRPP) via the transfer of pyrophosphoryl group from ATP to 1-hydroxyl of ribose-5-phosphate (Rib-5-P). This chain is Ribose-phosphate pyrophosphokinase, found in Cereibacter sphaeroides (strain KD131 / KCTC 12085) (Rhodobacter sphaeroides).